A 170-amino-acid chain; its full sequence is NADH-quinone oxidoreductase subunit B (170 aa).

4 residues coordinate [4Fe-4S] cluster: cysteine 42, cysteine 43, cysteine 107, and cysteine 136.

This sequence belongs to the complex I 20 kDa subunit family. NDH-1 is composed of 14 different subunits. Subunits NuoB, C, D, E, F, and G constitute the peripheral sector of the complex. [4Fe-4S] cluster is required as a cofactor.

The protein resides in the cell inner membrane. The enzyme catalyses a quinone + NADH + 5 H(+)(in) = a quinol + NAD(+) + 4 H(+)(out). In terms of biological role, NDH-1 shuttles electrons from NADH, via FMN and iron-sulfur (Fe-S) centers, to quinones in the respiratory chain. The immediate electron acceptor for the enzyme in this species is believed to be ubiquinone. Couples the redox reaction to proton translocation (for every two electrons transferred, four hydrogen ions are translocated across the cytoplasmic membrane), and thus conserves the redox energy in a proton gradient. In Campylobacter curvus (strain 525.92), this protein is NADH-quinone oxidoreductase subunit B.